The sequence spans 286 residues: Glycine--tRNA ligase alpha subunit (286 aa).

The protein belongs to the class-II aminoacyl-tRNA synthetase family. In terms of assembly, tetramer of two alpha and two beta subunits.

The protein localises to the cytoplasm. The enzyme catalyses tRNA(Gly) + glycine + ATP = glycyl-tRNA(Gly) + AMP + diphosphate. In Thermotoga petrophila (strain ATCC BAA-488 / DSM 13995 / JCM 10881 / RKU-1), this protein is Glycine--tRNA ligase alpha subunit.